A 97-amino-acid chain; its full sequence is uncharacterized protein (97 aa).

Residues 27 to 50 (IGESEDKTNSRGQPATMKEDEVED) are disordered.

This is an uncharacterized protein from Caldicellulosiruptor saccharolyticus (Caldocellum saccharolyticum).